Consider the following 609-residue polypeptide: UvrABC system protein C (609 aa).

The 79-residue stretch at 13–91 folds into the GIY-YIG domain; it reads HQPGVYRMFD…IKAFQPRYNV (79 aa). Positions 201 to 236 constitute a UVR domain; it reads QQVLEHLIKKMEQASMQLNFEQAAYFRDQIQAIRAV.

This sequence belongs to the UvrC family. As to quaternary structure, interacts with UvrB in an incision complex.

Its subcellular location is the cytoplasm. In terms of biological role, the UvrABC repair system catalyzes the recognition and processing of DNA lesions. UvrC both incises the 5' and 3' sides of the lesion. The N-terminal half is responsible for the 3' incision and the C-terminal half is responsible for the 5' incision. This chain is UvrABC system protein C, found in Histophilus somni (strain 2336) (Haemophilus somnus).